Reading from the N-terminus, the 341-residue chain is N-acetyl-gamma-glutamyl-phosphate reductase (341 aa).

Cys145 is an active-site residue.

It belongs to the NAGSA dehydrogenase family. Type 1 subfamily.

It is found in the cytoplasm. The enzyme catalyses N-acetyl-L-glutamate 5-semialdehyde + phosphate + NADP(+) = N-acetyl-L-glutamyl 5-phosphate + NADPH + H(+). It participates in amino-acid biosynthesis; L-arginine biosynthesis; N(2)-acetyl-L-ornithine from L-glutamate: step 3/4. Functionally, catalyzes the NADPH-dependent reduction of N-acetyl-5-glutamyl phosphate to yield N-acetyl-L-glutamate 5-semialdehyde. The sequence is that of N-acetyl-gamma-glutamyl-phosphate reductase from Streptomyces clavuligerus.